We begin with the raw amino-acid sequence, 429 residues long: Enolase (429 aa).

Gln-163 contacts (2R)-2-phosphoglycerate. Residue Glu-205 is the Proton donor of the active site. Residues Asp-242, Glu-285, and Asp-312 each contribute to the Mg(2+) site. Residues Lys-337, Arg-366, Ser-367, and Lys-388 each coordinate (2R)-2-phosphoglycerate. The Proton acceptor role is filled by Lys-337.

Belongs to the enolase family. The cofactor is Mg(2+).

It localises to the cytoplasm. Its subcellular location is the secreted. The protein localises to the cell surface. The catalysed reaction is (2R)-2-phosphoglycerate = phosphoenolpyruvate + H2O. The protein operates within carbohydrate degradation; glycolysis; pyruvate from D-glyceraldehyde 3-phosphate: step 4/5. Its function is as follows. Catalyzes the reversible conversion of 2-phosphoglycerate (2-PG) into phosphoenolpyruvate (PEP). It is essential for the degradation of carbohydrates via glycolysis. The sequence is that of Enolase from Azoarcus sp. (strain BH72).